We begin with the raw amino-acid sequence, 120 residues long: uncharacterized protein (120 aa).

The N-terminal stretch at M1 to A22 is a signal peptide. Residues F23–S59 lie on the Extracellular side of the membrane. A helical transmembrane segment spans residues L60 to L80. Over S81–N120 the chain is Cytoplasmic.

The protein resides in the membrane. This is an uncharacterized protein from Schizosaccharomyces pombe (strain 972 / ATCC 24843) (Fission yeast).